The chain runs to 109 residues: Large ribosomal subunit protein uL22 (109 aa).

This sequence belongs to the universal ribosomal protein uL22 family. Part of the 50S ribosomal subunit.

In terms of biological role, this protein binds specifically to 23S rRNA; its binding is stimulated by other ribosomal proteins, e.g. L4, L17, and L20. It is important during the early stages of 50S assembly. It makes multiple contacts with different domains of the 23S rRNA in the assembled 50S subunit and ribosome. Its function is as follows. The globular domain of the protein is located near the polypeptide exit tunnel on the outside of the subunit, while an extended beta-hairpin is found that lines the wall of the exit tunnel in the center of the 70S ribosome. The polypeptide is Large ribosomal subunit protein uL22 (Chromobacterium violaceum (strain ATCC 12472 / DSM 30191 / JCM 1249 / CCUG 213 / NBRC 12614 / NCIMB 9131 / NCTC 9757 / MK)).